The sequence spans 198 residues: Probable GTP-binding protein EngB (198 aa).

An EngB-type G domain is found at S36 to E198. Residues G44–S51, G70–L74, D88–G91, N155–D158, and I182–A184 each bind GTP. Mg(2+)-binding residues include S51 and T72.

This sequence belongs to the TRAFAC class TrmE-Era-EngA-EngB-Septin-like GTPase superfamily. EngB GTPase family. Mg(2+) is required as a cofactor.

Necessary for normal cell division and for the maintenance of normal septation. This chain is Probable GTP-binding protein EngB, found in Mesomycoplasma hyopneumoniae (strain J / ATCC 25934 / NCTC 10110) (Mycoplasma hyopneumoniae).